Consider the following 211-residue polypeptide: Allatostatins MIP (211 aa).

The signal sequence occupies residues 1 to 24 (MAHTKTRRTYGFLMVLLILGSACG). Residues 25–63 (NLVASGSAGSPPSNEPGGGGLSEQVVLDQLSESDLYGNN) constitute a propeptide that is removed on maturation. Trp-74 is modified (tryptophan amide). Residues 78 to 148 (SSSGDVSDPD…DDLAGEPDVE (71 aa)) constitute a propeptide that is removed on maturation. Residues 115-135 (ASGQSAQQQQQQPLQQQSQSG) show a composition bias toward low complexity. The tract at residues 115-142 (ASGQSAQQQQQQPLQQQSQSGEDFDDLA) is disordered. Tryptophan amide is present on residues Trp-159, Trp-175, Trp-189, and Trp-202. Positions 168–190 (WNKFRGAWGKREPTWNNLKGMWG) are disordered. Residues 206 to 211 (SQLPSN) constitute a propeptide that is removed on maturation.

In larvae, strongly expressed in the midgut region before and in between the copper cells, and in a group of cells in the posterior part of the larval midgut. Expressed in the neurons of many areas including the subesophageal ganglion/tritocerebrum (SOG), olfactory glomeruli, lateral ventral protocerebrum, mushroom body, the optic lobe medulla and in the antennal lobes.

The protein resides in the secreted. Its function is as follows. Ligand for the sex peptide receptor (SPR). Stabilizes sleep and maintains sleep homeostasis to inhibit the activity of wake-promoting circuits, such as those that involve the pigment dispersing factor (pdf) neurons. Regulated by the circadian clock network and pathways associated with a sleep homeostat. May also have a regulatory role in gut motility. The sequence is that of Allatostatins MIP (Mip) from Drosophila melanogaster (Fruit fly).